The following is a 252-amino-acid chain: MLKMRIIPCLDVKDGRVVKGVNFVGLRDAGDPVEQARLYDAAGADELCFLDITASHENRDTLLDVVGRTADQCFMPLTVGGGVRTTEDIRKLLLAGADKVSINTAAVTRPEFVREAAETFGAQCVVVALDAKSVGPGRFEIFTHGGRKATGLDAVDWAKRMVALGAGEILLTSMDRDGTRQGFNLPLTRAIADAVAVPVIASGGVGTLDHLVEGVRDGHATAVLAASIFHFGEYTIAQAKAHMAAAGLPMRL.

Catalysis depends on residues Asp-11 and Asp-130.

It belongs to the HisA/HisF family. In terms of assembly, heterodimer of HisH and HisF.

It is found in the cytoplasm. The catalysed reaction is 5-[(5-phospho-1-deoxy-D-ribulos-1-ylimino)methylamino]-1-(5-phospho-beta-D-ribosyl)imidazole-4-carboxamide + L-glutamine = D-erythro-1-(imidazol-4-yl)glycerol 3-phosphate + 5-amino-1-(5-phospho-beta-D-ribosyl)imidazole-4-carboxamide + L-glutamate + H(+). Its pathway is amino-acid biosynthesis; L-histidine biosynthesis; L-histidine from 5-phospho-alpha-D-ribose 1-diphosphate: step 5/9. Functionally, IGPS catalyzes the conversion of PRFAR and glutamine to IGP, AICAR and glutamate. The HisF subunit catalyzes the cyclization activity that produces IGP and AICAR from PRFAR using the ammonia provided by the HisH subunit. The sequence is that of Imidazole glycerol phosphate synthase subunit HisF from Rhodospirillum rubrum (strain ATCC 11170 / ATH 1.1.1 / DSM 467 / LMG 4362 / NCIMB 8255 / S1).